The sequence spans 351 residues: Protein RecA (351 aa).

ATP is bound at residue 64–71 (GPESSGKT). Residues 330–351 (DRFLQNGGPDPDDGDGDATAEM) form a disordered region. Positions 339–351 (DPDDGDGDATAEM) are enriched in acidic residues.

This sequence belongs to the RecA family.

The protein resides in the cytoplasm. Its function is as follows. Can catalyze the hydrolysis of ATP in the presence of single-stranded DNA, the ATP-dependent uptake of single-stranded DNA by duplex DNA, and the ATP-dependent hybridization of homologous single-stranded DNAs. It interacts with LexA causing its activation and leading to its autocatalytic cleavage. In Rhizobium leguminosarum bv. viciae, this protein is Protein RecA.